A 291-amino-acid polypeptide reads, in one-letter code: Protein pxr1 (291 aa).

Over residues 1–11 (MGLAAPRKRTK) the composition is skewed to basic residues. Disordered regions lie at residues 1–26 (MGLA…RSTD) and 146–268 (LVPP…FRGR). Polar residues-rich tracts occupy residues 15–25 (DPNNTTWSRST) and 146–156 (LVPPTSQNGQA). Positions 25 to 79 (TDGFGHRILKAQGWTPGSFLGPRNAAHSDLFTTASASHIRVVLKDDNLGLGARPK) constitute a G-patch domain. Residues 194–205 (ETNSRGSREKER) show a composition bias toward basic and acidic residues. The segment covering 206–219 (KREKRQMRRDKKRK) has biased composition (basic residues). Basic and acidic residues predominate over residues 230–247 (MQEKTRVQGPSEDVKPTE).

The protein belongs to the PINX1 family.

It is found in the nucleus. Its subcellular location is the nucleolus. Involved in rRNA-processing at A0, A1 and A2 sites and negatively regulates telomerase. The chain is Protein pxr1 (pxr1) from Aspergillus clavatus (strain ATCC 1007 / CBS 513.65 / DSM 816 / NCTC 3887 / NRRL 1 / QM 1276 / 107).